Here is a 109-residue protein sequence, read N- to C-terminus: Iron-sulfur cluster assembly protein CyaY (109 aa).

This sequence belongs to the frataxin family.

Functionally, involved in iron-sulfur (Fe-S) cluster assembly. May act as a regulator of Fe-S biogenesis. The polypeptide is Iron-sulfur cluster assembly protein CyaY (Burkholderia lata (strain ATCC 17760 / DSM 23089 / LMG 22485 / NCIMB 9086 / R18194 / 383)).